The chain runs to 972 residues: MDNLQVSDIETALQCISSTASQDDKNKALQFLEQFQRSTVAWSICNEILSKEDPTNALLELNIFAAQTLRNKVTYDLSQLENNLPQFKDSLLTLLLSHNQKLIITQLNVALARLAIQFLEWQNPIFEIISLLNSSPSILLNFLRILPEETLDIASTSLTEVEFNSRIHELIDPIAEDVLKFLVSCIDLLQNTDGNSSSSISLEQILRCLNSWSYEFPVEQLLTVQPLINLVFETISNGNESDMEAFDSAIDCLCVILRESRDTTNEQLISALFHQLMLLQEKLLPTLFTDHPLNDEYDDDLLEGMTRLFVEAGEAWSVVISKNPDFFKPMVLVLLMLTCKNEDLDVVSYTFPFWFNFKQSLVLPRYQESRKAYSDIFVKLINGIITHLQYPSGQFSSKEEEDKFKDFRYHMGDVLKDCTAVVGTSEALSQPLIRIKSAIENNNSWQIMEAPLFSLRTMAKEISLTENTILPEIIKIICNLPEQAKIRYASTLVLGRYTEWTAKHPELLEVQLQYIFNGFQLHEGSSDMQSIITASSHALMFFCSDCSKLLVGYIDQLINFFLNVQSSIDIESQFELCQGLSAVINNQPEAKVSVIFQKLVDDNLRQIEALIPQWKANPTLLAPQIADKIDLLYALFEELKPRYNYPQQGSEPLLPRIEFIWKALRTLLVDAGAMTDSIIVERVAKLLRRIFERFHVFCEPILPSVAEFLIQGYLTTGFGSYLWCSGSLIVIFGDDESFPISPSLKDAVWKFALSQCETFILNFNKFDKLQLNDYHEAIIDFFSLISDLIMFYPGAFLNSTELLGPVLNVALECVNKLDNYDAYICILRCLDDIISWGFKTPPISTVSIEIVPDEWRKQVINEVVIAHGNQLILVLFIGLVTTFENTAHSDAISCIVKCLRILTEANNNDATICIDWIYKVVEQLGQVTLNERDNLAKAVVEGLNSKDYRKVREGIRAFVGWYSRKNINSRFE.

It is found in the nucleus. Functionally, involved in mRNA transport from nucleus to cytoplasm. This is mRNA transport regulator MTR10 (MTR10) from Saccharomyces cerevisiae (strain ATCC 204508 / S288c) (Baker's yeast).